A 324-amino-acid chain; its full sequence is Chorismate mutase 1, chloroplastic (324 aa).

The transit peptide at 1-56 directs the protein to the chloroplast; sequence METQLLRFPSHTITSSITTNSSRNTTPFLPHKKWSHFVKFQLVNSSSSIKHGIRPL. Residue R70 participates in L-phenylalanine binding. Positions 70 to 324 constitute a Chorismate mutase domain; sequence RVDETESYTL…QVQYLLRRLD (255 aa). L-tyrosine-binding positions include R141 and 202–205; that span reads NYGS. 202–205 serves as a coordination point for L-phenylalanine; that stretch reads NYGS.

As to quaternary structure, homodimer. Mostly expressed in petal tubes and petal limbs, and, to a lower extent, in stigmas, anthers, sepals, roots, stems and leaves.

The protein resides in the plastid. Its subcellular location is the chloroplast stroma. It catalyses the reaction chorismate = prephenate. It participates in metabolic intermediate biosynthesis; prephenate biosynthesis; prephenate from chorismate: step 1/1. With respect to regulation, allosterically activated by tryptophan but not by tyrosine and phenylalanine. Its function is as follows. Component of the floral volatile benzenoid/phenylpropanoid (FVBPs) biosynthetic pathway. Mediates the conversion of chorismate to prephenate, thus coupling metabolites from the shikimate pathway to the synthesis of FVBPs in the corolla. In Petunia hybrida (Petunia), this protein is Chorismate mutase 1, chloroplastic.